The following is a 165-amino-acid chain: NADPH-dependent 7-cyano-7-deazaguanine reductase (165 aa).

The active-site Thioimide intermediate is the cysteine 56. The active-site Proton donor is the aspartate 63. Substrate contacts are provided by residues 78 to 80 (VES) and 97 to 98 (HE).

It belongs to the GTP cyclohydrolase I family. QueF type 1 subfamily.

Its subcellular location is the cytoplasm. It carries out the reaction 7-aminomethyl-7-carbaguanine + 2 NADP(+) = 7-cyano-7-deazaguanine + 2 NADPH + 3 H(+). It functions in the pathway tRNA modification; tRNA-queuosine biosynthesis. Catalyzes the NADPH-dependent reduction of 7-cyano-7-deazaguanine (preQ0) to 7-aminomethyl-7-deazaguanine (preQ1). The protein is NADPH-dependent 7-cyano-7-deazaguanine reductase of Geobacillus thermodenitrificans (strain NG80-2).